Here is a 270-residue protein sequence, read N- to C-terminus: Undecaprenyl-diphosphatase 1 (270 aa).

The next 7 membrane-spanning stretches (helical) occupy residues 5–25 (YYVL…PIPI), 42–62 (IEGF…VLLI), 89–109 (FFFI…GVLF), 117–137 (LKGV…LWII), 192–212 (FSFL…ITDI), 220–240 (TLFV…YISL), and 250–270 (GNLK…LIFL).

Belongs to the UppP family.

The protein localises to the cell membrane. It catalyses the reaction di-trans,octa-cis-undecaprenyl diphosphate + H2O = di-trans,octa-cis-undecaprenyl phosphate + phosphate + H(+). Its function is as follows. Catalyzes the dephosphorylation of undecaprenyl diphosphate (UPP). Confers resistance to bacitracin. The polypeptide is Undecaprenyl-diphosphatase 1 (Bacillus cereus (strain ATCC 14579 / DSM 31 / CCUG 7414 / JCM 2152 / NBRC 15305 / NCIMB 9373 / NCTC 2599 / NRRL B-3711)).